We begin with the raw amino-acid sequence, 721 residues long: Ribonucleoside-diphosphate reductase subunit alpha (721 aa).

Residues T168, 184–185, G213, 393–397, and 595–599 contribute to the substrate site; these read SC, NLCSE, and PTGSI. C185 and C422 are disulfide-bonded. Residue N393 is the Proton acceptor of the active site. The active-site Cysteine radical intermediate is C395. E397 serves as the catalytic Proton acceptor.

Belongs to the ribonucleoside diphosphate reductase large chain family. Tetramer of two alpha and two beta subunits.

It catalyses the reaction a 2'-deoxyribonucleoside 5'-diphosphate + [thioredoxin]-disulfide + H2O = a ribonucleoside 5'-diphosphate + [thioredoxin]-dithiol. With respect to regulation, under complex allosteric control mediated by deoxynucleoside triphosphates and ATP binding. The type of nucleotide bound at the specificity site determines substrate preference. It seems probable that ATP makes the enzyme reduce CDP and UDP, dGTP favors ADP reduction and dTTP favors GDP reduction. Provides the precursors necessary for DNA synthesis. Catalyzes the biosynthesis of deoxyribonucleotides from the corresponding ribonucleotides. The protein is Ribonucleoside-diphosphate reductase subunit alpha (nrdE) of Mycobacterium leprae (strain TN).